Consider the following 416-residue polypeptide: Enterobactin exporter EntS (416 aa).

Residues 1-21 are Cytoplasmic-facing; the sequence is MNRQSWLLNLSLLKTHPAFRA. The chain crosses the membrane as a helical span at residues 22-42; sequence VFLARFISIVSLGLLGVAVPV. The Periplasmic segment spans residues 43-55; it reads QIQMMTHSTWQVG. The chain crosses the membrane as a helical span at residues 56–76; sequence LSVTLTGSAMFVGLMVGGVLA. The Cytoplasmic portion of the chain corresponds to 77-83; sequence DRYERKK. Residues 84-104 form a helical membrane-spanning segment; that stretch reads VILLARGTCGIGFIGLCLNAL. Residues 105 to 109 are Periplasmic-facing; it reads LPEPS. The helical transmembrane segment at 110–130 threads the bilayer; that stretch reads LLAIYLLGLWDGFFASLGVTA. Over 131-156 the chain is Cytoplasmic; the sequence is LLAATPALVGRENLMQAGAITMLTVR. Residues 157–177 traverse the membrane as a helical segment; that stretch reads LGSVISPMLGGVLLATGGVAW. A topological domain (periplasmic) is located at residue asparagine 178. The helical transmembrane segment at 179–199 threads the bilayer; the sequence is YGLAAAGTFITLLPLLSLPAL. At 200–218 the chain is on the cytoplasmic side; that stretch reads PPPPQPREHPLKSLLAAFR. Residues 219-239 form a helical membrane-spanning segment; that stretch reads FLLSSPLIGGIALLGGLLTMA. Topologically, residues 240 to 256 are periplasmic; it reads SAVRVLYPALAINWHMS. Residues 257 to 277 traverse the membrane as a helical segment; sequence AAQIGLLYAAIPLGAAVGALT. The Cytoplasmic segment spans residues 278 to 287; sequence SGQLAHSVRP. Residues 288-307 traverse the membrane as a helical segment; sequence GLLMLVSTVGSFLAIGVFGL. At 308–313 the chain is on the periplasmic side; that stretch reads MPVWLL. Residues 314 to 336 traverse the membrane as a helical segment; that stretch reads GVICLALFGWLSAISSLLQYTLL. Residues 337–356 are Cytoplasmic-facing; that stretch reads QTQTPEAMLGRINGLWTAQN. Residues 357 to 377 form a helical membrane-spanning segment; that stretch reads VTGDAIGAALLGGLGAMMTPV. Alanine 378 is a topological domain (periplasmic). Residues 379-399 form a helical membrane-spanning segment; it reads SASVSGFGLVIVGLLLMLLLG. At 400–416 the chain is on the cytoplasmic side; that stretch reads ELRRFRQPPPVPDGAPL.

It belongs to the major facilitator superfamily. EntS (TC 2.A.1.38) family.

The protein localises to the cell inner membrane. Functionally, component of an export pathway for enterobactin. In Citrobacter koseri (strain ATCC BAA-895 / CDC 4225-83 / SGSC4696), this protein is Enterobactin exporter EntS.